The sequence spans 128 residues: Large ribosomal subunit protein bL12 (128 aa).

It belongs to the bacterial ribosomal protein bL12 family. As to quaternary structure, homodimer. Part of the ribosomal stalk of the 50S ribosomal subunit. Forms a multimeric L10(L12)X complex, where L10 forms an elongated spine to which 2 to 4 L12 dimers bind in a sequential fashion. Binds GTP-bound translation factors.

Functionally, forms part of the ribosomal stalk which helps the ribosome interact with GTP-bound translation factors. Is thus essential for accurate translation. The protein is Large ribosomal subunit protein bL12 of Thermotoga petrophila (strain ATCC BAA-488 / DSM 13995 / JCM 10881 / RKU-1).